Consider the following 151-residue polypeptide: UPF0178 protein Desal_2673 (151 aa).

Belongs to the UPF0178 family.

The polypeptide is UPF0178 protein Desal_2673 (Maridesulfovibrio salexigens (strain ATCC 14822 / DSM 2638 / NCIMB 8403 / VKM B-1763) (Desulfovibrio salexigens)).